The sequence spans 192 residues: Apoptosis regulator BAX (192 aa).

Met-1 carries the post-translational modification N-acetylmethionine. The short motif at 59–73 (LSECLKRIGDELDSN) is the BH3 element. The short motif at 98–118 (DMFSDGNFNWGRVVALFYFAS) is the BH1 element. Residue Lys-128 forms a Glycyl lysine isopeptide (Lys-Gly) (interchain with G-Cter in ubiquitin) linkage. The short motif at 150-165 (GWIQDQGGWDGLLSYF) is the BH2 element. Residues 172 to 192 (TVTIFVAGVLTASLTIWKKMG) form a helical membrane-spanning segment. Lys-190 is covalently cross-linked (Glycyl lysine isopeptide (Lys-Gly) (interchain with G-Cter in ubiquitin)).

This sequence belongs to the Bcl-2 family. Homodimer. Forms higher oligomers under stress conditions. Forms heterooligomers with BAK. Interacts with BCL2L11. Interaction with BCL2L11 promotes BAX oligomerization and association with mitochondrial membranes, with subsequent release of cytochrome c. Forms heterodimers with BCL2, BCL2L1 isoform Bcl-X(L), BCL2L2, MCL1 and A1. Interacts with SH3GLB1. Interacts with humanin; forms fibers with humanin which results in BAX conformational changes and sequestering of BAX into the fibers, preventing BAX activation. Interacts with SFN and YWHAZ; the interaction occurs in the cytoplasm. Under stress conditions, JNK-mediated phosphorylation of SFN and YWHAZ, releases BAX to mitochondria. Interacts with RNF144B, which regulates the ubiquitin-dependent stability of BAX. Interacts with CLU under stress conditions that cause a conformation change leading to BAX oligomerization and association with mitochondria. Does not interact with CLU in unstressed cells. Interacts with FAIM2/LFG2. Interacts with RTL10/BOP. Interacts (via a C-terminal 33 residues) with NOL3 (via CARD domain); inhibits BAX activation and translocation and consequently cytochrome c release from mitochondria. Interacts with GIMAP3/IAN4 and GIMAP5/IAN5; this interaction is increased, when cells initiate apoptosis upon IL2 withdrawal. Interacts with IRF3; the interaction is direct, increases upon Sendai virus infection and mediates the formation of the apoptosis complex TOMM70:HSP90AA1:IRF3:BAX. Interacts with MOAP1, facilitating BAX-dependent mitochondrial outer membrane permeabilization and apoptosis. Interacts with BCL2L10/BCL-B. Interacts with non-acetylated XRCC6/Ku70; this interaction leads to BAX sequestration in the cytosol, away from the mitochondria, preventing BAX-mediated apoptosis. As to quaternary structure, interacts with BCL2A1 and BCL2L1 isoform Bcl-X(L). In terms of assembly, (Microbial infection) Interacts with adenovirus E1B 19K protein; this interaction blocks BAX oligomerization. (Microbial infection) Interacts with human cytomegalovirus/HHV-5 protein vMIA/UL37. As to quaternary structure, (Microbial infection) Interacts with enterovirus protein 2B; this interaction activates BAX-induced apoptosis. Ubiquitinated in the absence of XRCC6/Ku70. Ubiquitination promotes protein degradation. Ubiquitinated on Lys-128 and Lys-190. 'Lys-63'-linked polyubiquitin chains on Lys-128 are removed by USP12. In terms of tissue distribution, expressed in a wide variety of tissues. Isoform Psi is found in glial tumors. Isoform Alpha is expressed in spleen, breast, ovary, testis, colon and brain, and at low levels in skin and lung. Isoform Sigma is expressed in spleen, breast, ovary, testis, lung, colon, brain and at low levels in skin. Isoform Alpha and isoform Sigma are expressed in pro-myelocytic leukemia, histiocytic lymphoma, Burkitt's lymphoma, T-cell lymphoma, lymphoblastic leukemia, breast adenocarcinoma, ovary adenocarcinoma, prostate carcinoma, prostate adenocarcinoma, lung carcinoma, epidermoid carcinoma, small cell lung carcinoma and colon adenocarcinoma cell lines.

It is found in the mitochondrion outer membrane. It localises to the cytoplasm. Its subcellular location is the nucleus. In terms of biological role, plays a role in the mitochondrial apoptotic process. Under normal conditions, BAX is largely cytosolic via constant retrotranslocation from mitochondria to the cytosol mediated by BCL2L1/Bcl-xL, which avoids accumulation of toxic BAX levels at the mitochondrial outer membrane (MOM). Under stress conditions, undergoes a conformation change that causes translocation to the mitochondrion membrane, leading to the release of cytochrome c that then triggers apoptosis. Promotes activation of CASP3, and thereby apoptosis. This chain is Apoptosis regulator BAX (BAX), found in Homo sapiens (Human).